We begin with the raw amino-acid sequence, 228 residues long: NAD(P)H-hydrate epimerase (228 aa).

The YjeF N-terminal domain occupies 10 to 214; that stretch reads AIDIDQELFN…DLERKYDLKI (205 aa). 58–62 contacts (6S)-NADPHX; it reads NNGGD. K(+) is bound by residues Asn-59 and Asp-123. Residues 127-133 and Asp-156 contribute to the (6S)-NADPHX site; that span reads GFSFKPP. Ser-159 contributes to the K(+) binding site.

Belongs to the NnrE/AIBP family. Requires K(+) as cofactor.

It catalyses the reaction (6R)-NADHX = (6S)-NADHX. The enzyme catalyses (6R)-NADPHX = (6S)-NADPHX. Functionally, catalyzes the epimerization of the S- and R-forms of NAD(P)HX, a damaged form of NAD(P)H that is a result of enzymatic or heat-dependent hydration. This is a prerequisite for the S-specific NAD(P)H-hydrate dehydratase to allow the repair of both epimers of NAD(P)HX. The polypeptide is NAD(P)H-hydrate epimerase (Pediculus humanus subsp. corporis (Body louse)).